The chain runs to 432 residues: Bouquet formation protein 4 (432 aa).

The disordered stretch occupies residues 1–21 (MTENEKSRSLPAERNPLYKDD). Residues 38-147 (EFPDGPATFV…SSTPSTYATP (110 aa)) enclose the HTH APSES-type domain. Positions 73 to 94 (ATSMFRSAFPKATQEEEDLEMR) form a DNA-binding region, H-T-H motif. Composition is skewed to low complexity over residues 139-152 (STPS…RPTA) and 163-172 (ESSTSATTTS). Disordered regions lie at residues 139–283 (STPS…GKIR) and 364–384 (KSSI…FEEN). The span at 180–228 (RLAEHLENSKKTILQHDNKEEDKEIHSEENETKDEIKSEKKEPEIKKQE) shows a compositional bias: basic and acidic residues. A compositionally biased stretch (polar residues) spans 229 to 241 (GGSSTEKVGQPSS).

In terms of assembly, interacts with rap1.

It localises to the cytoplasm. The protein localises to the nucleus. The protein resides in the nucleus inner membrane. In terms of biological role, connects telomeres to the nuclear envelop (NE) during both vegetative growth and meiosis. This connection ensures clustering of telomeres to the spindle pole body (SPB) when cells enter meiotic prophase. The sequence is that of Bouquet formation protein 4 (bqt4) from Schizosaccharomyces pombe (strain 972 / ATCC 24843) (Fission yeast).